A 213-amino-acid chain; its full sequence is Thiamine-phosphate synthase (213 aa).

4-amino-2-methyl-5-(diphosphooxymethyl)pyrimidine is bound by residues 40 to 44 (QFREK) and asparagine 75. Aspartate 76 and aspartate 95 together coordinate Mg(2+). Serine 113 lines the 4-amino-2-methyl-5-(diphosphooxymethyl)pyrimidine pocket. 139–141 (TPS) is a binding site for 2-[(2R,5Z)-2-carboxy-4-methylthiazol-5(2H)-ylidene]ethyl phosphate. Lysine 142 contacts 4-amino-2-methyl-5-(diphosphooxymethyl)pyrimidine. 2-[(2R,5Z)-2-carboxy-4-methylthiazol-5(2H)-ylidene]ethyl phosphate contacts are provided by residues glycine 171 and 191-192 (IS).

Belongs to the thiamine-phosphate synthase family. It depends on Mg(2+) as a cofactor.

It carries out the reaction 2-[(2R,5Z)-2-carboxy-4-methylthiazol-5(2H)-ylidene]ethyl phosphate + 4-amino-2-methyl-5-(diphosphooxymethyl)pyrimidine + 2 H(+) = thiamine phosphate + CO2 + diphosphate. It catalyses the reaction 2-(2-carboxy-4-methylthiazol-5-yl)ethyl phosphate + 4-amino-2-methyl-5-(diphosphooxymethyl)pyrimidine + 2 H(+) = thiamine phosphate + CO2 + diphosphate. The catalysed reaction is 4-methyl-5-(2-phosphooxyethyl)-thiazole + 4-amino-2-methyl-5-(diphosphooxymethyl)pyrimidine + H(+) = thiamine phosphate + diphosphate. Its pathway is cofactor biosynthesis; thiamine diphosphate biosynthesis; thiamine phosphate from 4-amino-2-methyl-5-diphosphomethylpyrimidine and 4-methyl-5-(2-phosphoethyl)-thiazole: step 1/1. Condenses 4-methyl-5-(beta-hydroxyethyl)thiazole monophosphate (THZ-P) and 2-methyl-4-amino-5-hydroxymethyl pyrimidine pyrophosphate (HMP-PP) to form thiamine monophosphate (TMP). The polypeptide is Thiamine-phosphate synthase (Staphylococcus aureus (strain MRSA252)).